The sequence spans 1392 residues: ATP-dependent helicase/nuclease subunit A (1392 aa).

Residues 3 to 489 (NPKWTPAQQA…IDLNQNFRSR (487 aa)) enclose the UvrD-like helicase ATP-binding domain. 24 to 31 (AAAGSGKT) contributes to the ATP binding site. 3 disordered regions span residues 291 to 319 (RGSKKNLPDSLIDEENSKRLREESKKARD), 555 to 594 (KRGAEDAATEVDSPAKGEGEEFEQNREPESGDDESSLEEA), and 1051 to 1126 (GPVQ…LDTK). Basic and acidic residues-rich tracts occupy residues 305 to 319 (ENSKRLREESKKARD) and 567 to 583 (SPAKGEGEEFEQNREPE). The 331-residue stretch at 556 to 886 (RGAEDAATEV…RFITVHSSKG (331 aa)) folds into the UvrD-like helicase C-terminal domain. Residues 584-594 (SGDDESSLEEA) are compositionally biased toward acidic residues. The span at 1088-1113 (ASGKTEIPGETKNSEETKTSEDKKNL) shows a compositional bias: basic and acidic residues.

The protein belongs to the helicase family. AddA subfamily. As to quaternary structure, heterodimer of AddA and AddB/RexB. Requires Mg(2+) as cofactor.

It catalyses the reaction Couples ATP hydrolysis with the unwinding of duplex DNA by translocating in the 3'-5' direction.. The catalysed reaction is ATP + H2O = ADP + phosphate + H(+). Functionally, the heterodimer acts as both an ATP-dependent DNA helicase and an ATP-dependent, dual-direction single-stranded exonuclease. Recognizes the chi site generating a DNA molecule suitable for the initiation of homologous recombination. The AddA nuclease domain is required for chi fragment generation; this subunit has the helicase and 3' -&gt; 5' nuclease activities. This chain is ATP-dependent helicase/nuclease subunit A, found in Desulfitobacterium hafniense (strain DSM 10664 / DCB-2).